We begin with the raw amino-acid sequence, 675 residues long: Protein PALS1 (675 aa).

The tract at residues 1-78 is disordered; it reads MTTSHMNGHV…RREEEGKKQE (78 aa). The segment at 1 to 345 is required for the correct localization of PALS1 and PATJ at cell-cell contacts and the normal formation of tight junctions and adherens junctions; that stretch reads MTTSHMNGHV…QQIKPPPAKE (345 aa). 2 stretches are compositionally biased toward basic and acidic residues: residues 10 to 36 and 54 to 78; these read VTEESDNEVKNVDLASPEEHQKHREMA and AQLERIRQQQEDMRRRREEEGKKQE. Phosphoserine is present on residues serine 14 and serine 25. The tract at residues 21–140 is interaction with PARD6B; sequence VDLASPEEHQ…LKHIQHTLVD (120 aa). Serine 83 and serine 84 each carry phosphoserine. L27 domains lie at 120–177 and 179–235; these read KILE…NKAS and PFPL…MQLE. The segment at 181–243 is interaction with LIN7C; the sequence is PLISNAQDLA…LEPFTDERVY (63 aa). The 81-residue stretch at 256–336 folds into the PDZ domain; it reads IVRIEKARDI…TLTFVLIPSQ (81 aa). The 73-residue stretch at 345 to 417 folds into the SH3 domain; it reads ETVIHVKAHF…PGKSFQQQRE (73 aa). The region spanning 479-660 is the Guanylate kinase-like domain; that stretch reads KRPIILIGPQ…AYQELLRLIN (182 aa). 486–493 contributes to the ATP binding site; that stretch reads GPQNCGQN.

The protein belongs to the MAGUK family. As to quaternary structure, heterodimer with MPP1. Forms a heterotrimeric complex composed of PALS1, LIN7B and PATJ; the N-terminal L27 domain of PALS1 interacts with the L27 domain of PATJ and the C-terminal L27 domain of PALS1 interacts with the L27 domain of LIN7B. Component of a complex composed of PALS1, CRB1 and MPP4. Component of a complex whose core is composed of ARHGAP17, AMOT, PALS1, PATJ and PARD3/PAR3. Component of a complex composed of PALS1, CRB1 and EPB41L5. Within the complex, interacts (via HOOK domain) with EPB41L5 (via FERM domain), and interacts with CRB1 (via intracellular domain). Component of a complex composed of PALS1, MPP3 and CRB1; PALS1 acts as a bridging protein between MPP3 (via guanylate kinase-like domain) and CRB1. Component of a complex composed of CRB3, PALS1 and PATJ. As part of the Crumbs complex; interacts with WWP1, the interaction is enhanced by AMOTL2 and facilitates WWP1 localization to the plasma membrane. The Crumbs complex promotes monoubiquitination of AMOTL2 by WWP1, which activates the Hippo signaling pathway. Interacts (via PDZ domain) with PATJ (via N-terminus). Interacts with EZR. Interacts (via PDZ domain) with CRB1 (via C-terminal ERLI motif). While the PDZ domain is sufficient for interaction with CRB1, the adjacent SH3 and guanylate kinase-like domains are likely to contribute to a high affinity interaction. Interacts with WWTR1/TAZ (via WW domain). Interacts with MPP7. Interacts (via PDZ domain) with CRB3 (via C-terminus). Interacts with LIN7C. Interacts with MPDZ. Interacts with PARD6B. Interacts with SC6A1. Interacts with CDH5; the interaction promotes PALS1 localization to cell junctions and is required for CDH5-mediated vascular lumen formation and endothelial cell. Interacts with NPHP1 (via coiled coil and SH3 domains). Interacts with NPHP4. Interacts with CRB2.

It is found in the golgi apparatus. It localises to the cell membrane. The protein localises to the endomembrane system. The protein resides in the cell junction. Its subcellular location is the tight junction. It is found in the adherens junction. It localises to the cell projection. The protein localises to the axon. The protein resides in the perikaryon. Its subcellular location is the apical cell membrane. Functionally, plays a role in tight junction biogenesis and in the establishment of cell polarity in epithelial cells. Also involved in adherens junction biogenesis by ensuring correct localization of the exocyst complex protein EXOC4/SEC8 which allows trafficking of adherens junction structural component CDH1 to the cell surface. Plays a role through its interaction with CDH5 in vascular lumen formation and endothelial membrane polarity. Required during embryonic and postnatal retinal development. Required for the maintenance of cerebellar progenitor cells in an undifferentiated proliferative state, preventing premature differentiation, and is required for cerebellar histogenesis, fissure formation, cerebellar layer organization and cortical development. Plays a role in neuronal progenitor cell survival, potentially via promotion of mTOR signaling. Plays a role in the radial and longitudinal extension of the myelin sheath in Schwann cells. May modulate SC6A1/GAT1-mediated GABA uptake by stabilizing the transporter. May play a role in the T-cell receptor-mediated activation of NF-kappa-B. Required for localization of EZR to the apical membrane of parietal cells and may play a role in the dynamic remodeling of the apical cytoskeleton. Required for the normal polarized localization of the vesicular marker STX4. Required for the correct trafficking of the myelin proteins PMP22 and MAG. Involved in promoting phosphorylation and cytoplasmic retention of transcriptional coactivators YAP1 and WWTR1/TAZ which leads to suppression of TGFB1-dependent transcription of target genes such as CCN2/CTGF, SERPINE1/PAI1, SNAI1/SNAIL1 and SMAD7. This Canis lupus familiaris (Dog) protein is Protein PALS1.